We begin with the raw amino-acid sequence, 318 residues long: Phospholipid scramblase 1 (318 aa).

Residues 1–14 (MDKQNSQMNASHPE) are compositionally biased toward polar residues. A disordered region spans residues 1–64 (MDKQNSQMNA…GPGPAGFPVP (64 aa)). The interval 1–84 (MDKQNSQMNA…NQPVGAAGVP (84 aa)) is proline-rich domain (PRD). At 1-288 (MDKQNSQMNA…IQFPLDLDVK (288 aa)) the chain is on the cytoplasmic side. The SH3-binding 1 signature appears at 18 to 26 (PVGYPPQYP). Short sequence motifs (PPXY motif) lie at residues 22–25 (PPQY) and 33–36 (PPGY). A compositionally biased stretch (low complexity) spans 31 to 44 (QGPPGYSGYPGPQV). Positions 42 to 50 (PQVSYPPPP) match the SH3-binding 2 motif. 2 positions are modified to phosphotyrosine; by ABL: tyrosine 69 and tyrosine 74. The SH3-binding 3 motif lies at 84–92 (PWMPAPQPP). The tract at residues 99–290 (LEYLSQIDQI…FPLDLDVKMK (192 aa)) is interaction with hepatitis C virus E2 glycoprotein. At threonine 161 the chain carries Phosphothreonine; by PKC/PRKCD. Residues cysteine 184, cysteine 185, cysteine 186, cysteine 188, and cysteine 189 are each lipidated (S-palmitoyl cysteine). The Nuclear localization signal motif lies at 257-266 (GKISKHWTGI). A helical membrane pass occupies residues 289–305 (MKAVMIGACFLIDFMFF). Over 306 to 318 (ESTGSQEQKSGVW) the chain is Extracellular.

This sequence belongs to the phospholipid scramblase family. In terms of assembly, forms homooligomers in the presence of calcium. Interacts with ABL. Interacts with RELT, RELL1 and RELL2. Interacts with OXSR1 in the presence of RELT. Interacts with TOP2A and TOP2B. Interacts with OCLN. Interacts with TRPC5. Interacts with TRPC1 and TRPC4. Interacts with ILDR1. As to quaternary structure, (Microbial infection) Interacts with hepatitis C virus E1 and E2 glycoproteins. (Microbial infection) Interacts with T-cell leukemia virus (HTLV)-1 protein Tax (via N-terminus); this interaction represses Tax homodimerization. In terms of assembly, (Microbial infection) Interacts with HIV-1 protein Tat; this interaction represses the Tat-dependent transactivation of the HIV-1 long terminal repeat (LTR) and reduces the nuclear translocation of Tat. As to quaternary structure, (Microbial infection) Interacts with hepatitis B virus protein HBx; this interaction promotes the proteasomal degradation of HBx. (Microbial infection) Interacts with human cytomegalovirus proteins IE1 and IE2. In terms of assembly, (Microbial infection) Interacts with Epstein Barr virus (EBV) lytic switch protein BZLF1; this interaction negatively regulates the transcriptional regulatory activity of BZLF1 by preventing the formation of the BZLF1-CBP complex. As to quaternary structure, (Microbial infection) Interacts with influenza virus nucleoprotein NP. Requires Ca(2+) as cofactor. The cofactor is Mg(2+). Zn(2+) serves as cofactor. Phosphorylation at Thr-161 by PKC/PKCD increases its phospholipid scramblase activity during both cell stimulation and apoptosis. Phosphorylated by OXSR1 in the presence of RELT. In terms of processing, palmitoylation is required for its phospholipid scramblase activity. Palmitoylation regulates its localization to the cell membrane or the nucleus; trafficking to the cell membrane is dependent upon palmitoylation whereas in the absence of palmitoylation, localizes to the nucleus. In terms of tissue distribution, expressed in platelets, erythrocyte membranes, lymphocytes, spleen, thymus, prostate, testis, uterus, intestine, colon, heart, placenta, lung, liver, kidney and pancreas. Not detected in brain and skeletal muscle.

Its subcellular location is the cell membrane. It is found in the nucleus. The protein localises to the cytoplasm. It localises to the perinuclear region. It catalyses the reaction a 1,2-diacyl-sn-glycero-3-phosphocholine(in) = a 1,2-diacyl-sn-glycero-3-phosphocholine(out). The catalysed reaction is a 1,2-diacyl-sn-glycero-3-phosphoethanolamine(in) = a 1,2-diacyl-sn-glycero-3-phosphoethanolamine(out). The enzyme catalyses a 1,2-diacyl-sn-glycero-3-phospho-L-serine(in) = a 1,2-diacyl-sn-glycero-3-phospho-L-serine(out). Activated by Pb(2+) and Hg(2+) ions. Phosphorylation at Thr-161 by PKC/PKCD increases its phospholipid scramblase activity during both cell stimulation and apoptosis. Functionally, catalyzes calcium-induced ATP-independent rapid bidirectional and non-specific movement of phospholipids (lipid scrambling or lipid flip-flop) between the inner and outer leaflet of the plasma membrane resulting in collapse of the phospholipid asymmetry which leads to phosphatidylserine externalization on the cell surface. Mediates calcium-dependent phosphatidylserine externalization and apoptosis in neurons via its association with TRPC5. Also exhibits magnesium-dependent nuclease activity against double-stranded DNA and RNA but not single-stranded DNA and can enhance DNA decatenation mediated by TOP2A. Negatively regulates FcR-mediated phagocytosis in differentiated macrophages. May contribute to cytokine-regulated cell proliferation and differentiation. May play a role in the antiviral response of interferon (IFN) by amplifying and enhancing the IFN response through increased expression of select subset of potent antiviral genes. Inhibits the functions of viral transactivators, including human T-cell leukemia virus (HTLV)-1 protein Tax, human immunodeficiency virus (HIV)-1 Tat, human hepatitis B virus (HBV) HBx, Epstein-Barr virus (EBV) BZLF1 and human cytomegalovirus IE1 and IE2 proteins through direct interactions. Also mediates the inhibition of influenza virus infection by preventing nuclear import of the viral nucleoprotein/NP. Plays a crucial role as a defense factor against SARS-CoV-2 independently of its scramblase activity by directly targeting nascent viral vesicles to prevent virus-membrane fusion and the release of viral RNA into the host-cell cytosol. Its function is as follows. (Microbial infection) Acts as an attachment receptor for HCV. The chain is Phospholipid scramblase 1 (PLSCR1) from Homo sapiens (Human).